Consider the following 215-residue polypeptide: 3,4-dihydroxy-2-butanone 4-phosphate synthase (215 aa).

Residues 37-38 (RE), Asp-42, 150-154 (RRGHT), and Glu-175 each bind D-ribulose 5-phosphate. Glu-38 lines the Mg(2+) pocket. His-153 is a Mg(2+) binding site.

The protein belongs to the DHBP synthase family. In terms of assembly, homodimer. It depends on Mg(2+) as a cofactor. Mn(2+) is required as a cofactor.

It carries out the reaction D-ribulose 5-phosphate = (2S)-2-hydroxy-3-oxobutyl phosphate + formate + H(+). It functions in the pathway cofactor biosynthesis; riboflavin biosynthesis; 2-hydroxy-3-oxobutyl phosphate from D-ribulose 5-phosphate: step 1/1. In terms of biological role, catalyzes the conversion of D-ribulose 5-phosphate to formate and 3,4-dihydroxy-2-butanone 4-phosphate. This Desulfatibacillum aliphaticivorans protein is 3,4-dihydroxy-2-butanone 4-phosphate synthase.